We begin with the raw amino-acid sequence, 142 residues long: Baculoviral IAP repeat-containing protein 5 (142 aa).

The BIR repeat unit spans residues 18-88 (RISTFKNWPF…KHSSGCAFLS (71 aa)). Ser20 carries the post-translational modification Phosphoserine; by AURKC. Lys23 carries the N6-acetyllysine modification. Phosphothreonine; by CDK1 and CDK15 is present on Thr34. Thr48 carries the post-translational modification Phosphothreonine. The Zn(2+) site is built by Cys57, Cys60, His77, and Cys84. An N6-acetyllysine mark is found at Lys90, Lys110, Lys112, and Lys115. At Thr117 the chain carries Phosphothreonine; by AURKB. Lys129 carries the N6-acetyllysine modification.

This sequence belongs to the IAP family. Monomer or homodimer. Exists as a homodimer in the apo state and as a monomer in the CPC-bound state. The monomer protects cells against apoptosis more efficiently than the dimer. Only the dimeric form is capable of enhancing tubulin stability in cells. When phosphorylated, interacts with LAMTOR5/HBXIP; the resulting complex binds pro-CASP9, as well as active CASP9, but much less efficiently. Component of the chromosomal passenger complex (CPC) composed of at least BIRC5/survivin, CDCA8/borealin, INCENP, AURKB or AURKC; in the complex forms a triple-helix bundle-based subcomplex with INCENP and CDCA8. Interacts with JTB. Interacts (via BIR domain) with histone H3 phosphorylated at 'Thr-3' (H3pT3). Interacts with EVI5. Interacts with GTP-bound RAN in both the S and M phases of the cell cycle. Interacts with USP9X. Interacts with tubulin. Interacts with BIRC2/c-IAP1. The acetylated form at Lys-129 interacts with STAT3. The monomeric form deacetylated at Lys-129 interacts with XPO1/CRM1. The monomeric form interacts with XIAP/BIRC4. Both the dimeric and monomeric form can interact with DIABLO/SMAC. Interacts with BIRC6/bruce. Interacts with FBXL7; this interaction facilitates the polyubiquitination and subsequent proteasomal degradation of BIRC5 by the SCF(FBXL7) E3 ubiquitin-protein ligase complex. Post-translationally, ubiquitinated by the Cul9-RING ubiquitin-protein ligase complex, leading to its degradation. Ubiquitination is required for centrosomal targeting. Deubiquitinated by USP35 or USP38; leading to stabilization. In terms of processing, acetylation at Lys-129 results in its homodimerization, while deacetylation promotes the formation of monomers which heterodimerize with XPO1/CRM1 which facilitates its nuclear export. The acetylated form represses STAT3 transactivation. The dynamic equilibrium between its acetylation and deacetylation at Lys-129 determines its interaction with XPO1/CRM1, its subsequent subcellular localization, and its ability to inhibit STAT3 transactivation. In vitro phosphorylation at Thr-117 by AURKB prevents interaction with INCENP and localization to mitotic chromosomes. Phosphorylation at Thr-48 by CK2 is critical for its mitotic and anti-apoptotic activities. Phosphorylation at Thr-34 by CDK15 is critical for its anti-apoptotic activity. Phosphorylation at Ser-20 by AURKC is critical for regulation of proper chromosome alignment and segregation, and possibly cytokinesis.

Its subcellular location is the cytoplasm. The protein localises to the nucleus. It localises to the chromosome. It is found in the centromere. The protein resides in the cytoskeleton. Its subcellular location is the spindle. The protein localises to the kinetochore. It localises to the midbody. In terms of biological role, multitasking protein that has dual roles in promoting cell proliferation and preventing apoptosis. Component of a chromosome passage protein complex (CPC) which is essential for chromosome alignment and segregation during mitosis and cytokinesis. Acts as an important regulator of the localization of this complex; directs CPC movement to different locations from the inner centromere during prometaphase to midbody during cytokinesis and participates in the organization of the center spindle by associating with polymerized microtubules. Involved in the recruitment of CPC to centromeres during early mitosis via association with histone H3 phosphorylated at 'Thr-3' (H3pT3) during mitosis. The complex with RAN plays a role in mitotic spindle formation by serving as a physical scaffold to help deliver the RAN effector molecule TPX2 to microtubules. May counteract a default induction of apoptosis in G2/M phase. The acetylated form represses STAT3 transactivation of target gene promoters. May play a role in neoplasia. Inhibitor of CASP3 and CASP7. Essential for the maintenance of mitochondrial integrity and function. This is Baculoviral IAP repeat-containing protein 5 (BIRC5) from Sus scrofa (Pig).